A 244-amino-acid chain; its full sequence is Transcriptional regulatory protein YpdB (244 aa).

The Response regulatory domain occupies 2–116 (KVIIVEDEFL…RITGMLQKLE (115 aa)). Position 53 is a 4-aspartylphosphate (Asp-53). An HTH LytTR-type domain is found at 139–244 (INLVKDERII…VKEFRQLMHL (106 aa)).

In terms of processing, phosphorylated by YpdA.

The protein localises to the cytoplasm. Functionally, member of the two-component regulatory system YpdA/YpdB. YpdB regulates expression of yhjX by binding to its promoter region. The protein is Transcriptional regulatory protein YpdB (ypdB) of Escherichia coli O157:H7.